The primary structure comprises 998 residues: Type II restriction enzyme and methyltransferase RM.Eco57I (998 aa).

It in the C-terminal section; belongs to the N(4)/N(6)-methyltransferase family. Monomer.

It catalyses the reaction Endonucleolytic cleavage of DNA to give specific double-stranded fragments with terminal 5'-phosphates.. The enzyme catalyses a 2'-deoxyadenosine in DNA + S-adenosyl-L-methionine = an N(6)-methyl-2'-deoxyadenosine in DNA + S-adenosyl-L-homocysteine + H(+). Mg(2+) is absolutely required for DNA restriction. Its function is as follows. An E, G and S subtype restriction enzyme that recognizes the (non-palindromic) double-stranded sequence 5'-CTGAAG-3' and cleaves respectively 22 bases after C-1 and 14 bases before C'-1; cleavage of lambda DNA is never complete. Also acts as a methylase that causes specific methylation on A-5 in 5'-CTGAAG-3', the other strand is methylated by the M.Eco57I methylase. The chain is Type II restriction enzyme and methyltransferase RM.Eco57I from Escherichia coli.